The following is a 147-amino-acid chain: Ribosome maturation factor RimP (147 aa).

It belongs to the RimP family.

It localises to the cytoplasm. Its function is as follows. Required for maturation of 30S ribosomal subunits. This chain is Ribosome maturation factor RimP, found in Legionella pneumophila (strain Lens).